Consider the following 149-residue polypeptide: UPF0260 protein PA1299 (149 aa).

It belongs to the UPF0260 family.

This chain is UPF0260 protein PA1299, found in Pseudomonas aeruginosa (strain ATCC 15692 / DSM 22644 / CIP 104116 / JCM 14847 / LMG 12228 / 1C / PRS 101 / PAO1).